The following is a 283-amino-acid chain: 4-hydroxy-3-methylbut-2-enyl diphosphate reductase (283 aa).

Cys-12 is a [4Fe-4S] cluster binding site. (2E)-4-hydroxy-3-methylbut-2-enyl diphosphate contacts are provided by His-40 and His-72. Dimethylallyl diphosphate contacts are provided by His-40 and His-72. 2 residues coordinate isopentenyl diphosphate: His-40 and His-72. Cys-94 is a [4Fe-4S] cluster binding site. His-122 serves as a coordination point for (2E)-4-hydroxy-3-methylbut-2-enyl diphosphate. His-122 lines the dimethylallyl diphosphate pocket. His-122 lines the isopentenyl diphosphate pocket. The Proton donor role is filled by Glu-124. Thr-160 lines the (2E)-4-hydroxy-3-methylbut-2-enyl diphosphate pocket. Cys-188 contributes to the [4Fe-4S] cluster binding site. Residues Ser-216, Asn-218, and Ser-259 each contribute to the (2E)-4-hydroxy-3-methylbut-2-enyl diphosphate site. Residues Ser-216, Asn-218, and Ser-259 each coordinate dimethylallyl diphosphate. Isopentenyl diphosphate contacts are provided by Ser-216, Asn-218, and Ser-259.

This sequence belongs to the IspH family. [4Fe-4S] cluster serves as cofactor.

It catalyses the reaction isopentenyl diphosphate + 2 oxidized [2Fe-2S]-[ferredoxin] + H2O = (2E)-4-hydroxy-3-methylbut-2-enyl diphosphate + 2 reduced [2Fe-2S]-[ferredoxin] + 2 H(+). The enzyme catalyses dimethylallyl diphosphate + 2 oxidized [2Fe-2S]-[ferredoxin] + H2O = (2E)-4-hydroxy-3-methylbut-2-enyl diphosphate + 2 reduced [2Fe-2S]-[ferredoxin] + 2 H(+). It participates in isoprenoid biosynthesis; dimethylallyl diphosphate biosynthesis; dimethylallyl diphosphate from (2E)-4-hydroxy-3-methylbutenyl diphosphate: step 1/1. The protein operates within isoprenoid biosynthesis; isopentenyl diphosphate biosynthesis via DXP pathway; isopentenyl diphosphate from 1-deoxy-D-xylulose 5-phosphate: step 6/6. In terms of biological role, catalyzes the conversion of 1-hydroxy-2-methyl-2-(E)-butenyl 4-diphosphate (HMBPP) into a mixture of isopentenyl diphosphate (IPP) and dimethylallyl diphosphate (DMAPP). Acts in the terminal step of the DOXP/MEP pathway for isoprenoid precursor biosynthesis. The chain is 4-hydroxy-3-methylbut-2-enyl diphosphate reductase from Dictyoglomus turgidum (strain DSM 6724 / Z-1310).